Consider the following 317-residue polypeptide: 2,3-dihydroxyphenylpropionate/2,3-dihydroxicinnamic acid 1,2-dioxygenase (317 aa).

His115 acts as the Proton donor in catalysis. His179 acts as the Proton acceptor in catalysis.

It belongs to the LigB/MhpB extradiol dioxygenase family. As to quaternary structure, homotetramer. Fe(2+) is required as a cofactor.

It carries out the reaction 3-(2,3-dihydroxyphenyl)propanoate + O2 = (2Z,4E)-2-hydroxy-6-oxonona-2,4-dienedioate + H(+). The catalysed reaction is (2E)-3-(2,3-dihydroxyphenyl)prop-2-enoate + O2 = (2Z,4E,7E)-2-hydroxy-6-oxonona-2,4,7-trienedioate + H(+). Its pathway is aromatic compound metabolism; 3-phenylpropanoate degradation. Functionally, catalyzes the non-heme iron(II)-dependent oxidative cleavage of 2,3-dihydroxyphenylpropionic acid and 2,3-dihydroxicinnamic acid into 2-hydroxy-6-ketononadienedioate and 2-hydroxy-6-ketononatrienedioate, respectively. The sequence is that of 2,3-dihydroxyphenylpropionate/2,3-dihydroxicinnamic acid 1,2-dioxygenase from Paraburkholderia phymatum (strain DSM 17167 / CIP 108236 / LMG 21445 / STM815) (Burkholderia phymatum).